Here is a 365-residue protein sequence, read N- to C-terminus: Putative chalcone synthase (365 aa).

Cysteine 144 is an active-site residue.

The protein belongs to the thiolase-like superfamily. Chalcone/stilbene synthases family.

It carries out the reaction (E)-4-coumaroyl-CoA + 3 malonyl-CoA + 3 H(+) = 2',4,4',6'-tetrahydroxychalcone + 3 CO2 + 4 CoA. This chain is Putative chalcone synthase (bcsA), found in Bacillus subtilis (strain 168).